Here is a 485-residue protein sequence, read N- to C-terminus: Glutamyl-tRNA(Gln) amidotransferase subunit A (485 aa).

Active-site charge relay system residues include K79 and S154. S178 serves as the catalytic Acyl-ester intermediate.

The protein belongs to the amidase family. GatA subfamily. In terms of assembly, heterotrimer of A, B and C subunits.

The catalysed reaction is L-glutamyl-tRNA(Gln) + L-glutamine + ATP + H2O = L-glutaminyl-tRNA(Gln) + L-glutamate + ADP + phosphate + H(+). In terms of biological role, allows the formation of correctly charged Gln-tRNA(Gln) through the transamidation of misacylated Glu-tRNA(Gln) in organisms which lack glutaminyl-tRNA synthetase. The reaction takes place in the presence of glutamine and ATP through an activated gamma-phospho-Glu-tRNA(Gln). This is Glutamyl-tRNA(Gln) amidotransferase subunit A from Bacillus licheniformis (strain ATCC 14580 / DSM 13 / JCM 2505 / CCUG 7422 / NBRC 12200 / NCIMB 9375 / NCTC 10341 / NRRL NRS-1264 / Gibson 46).